A 67-amino-acid polypeptide reads, in one-letter code: Beta-defensin 110 (67 aa).

The N-terminal stretch at 1–19 (MKIQLFFFILLFWVTILPA) is a signal peptide. Intrachain disulfides connect Cys-35-Cys-63, Cys-42-Cys-56, and Cys-46-Cys-64.

It belongs to the beta-defensin family.

The protein resides in the secreted. Functionally, has antibacterial activity. The polypeptide is Beta-defensin 110 (DEFB110) (Pan troglodytes (Chimpanzee)).